The following is a 259-amino-acid chain: Heat-labile enterotoxin IIA, A chain (259 aa).

The signal sequence occupies residues M1 to A18. R23–G37 serves as a coordination point for NAD(+). E128 is a catalytic residue. Residues C203 and C215 are joined by a disulfide bond.

It belongs to the enterotoxin A family. In terms of assembly, heterohexamer of one A chain and of five B chains.

In terms of biological role, the biological activity of the toxin is produced by the A chain, which activates intracellular adenyl cyclase. The chain is Heat-labile enterotoxin IIA, A chain from Escherichia coli.